Reading from the N-terminus, the 308-residue chain is Pyrroline-5-carboxylate reductase 3 (308 aa).

It belongs to the pyrroline-5-carboxylate reductase family. As to quaternary structure, homodecamer; composed of 5 homodimers.

The protein resides in the cytoplasm. The catalysed reaction is L-proline + NADP(+) = (S)-1-pyrroline-5-carboxylate + NADPH + 2 H(+). It carries out the reaction L-proline + NAD(+) = (S)-1-pyrroline-5-carboxylate + NADH + 2 H(+). It functions in the pathway amino-acid biosynthesis; L-proline biosynthesis; L-proline from L-glutamate 5-semialdehyde: step 1/1. Functionally, oxidoreductase that catalyzes the last step in proline biosynthesis, which corresponds to the reduction of pyrroline-5-carboxylate (P5C) to L-proline using NAD(P)H. Proline is synthesized from either glutamate or ornithine; both are converted to P5C, and then to proline via pyrroline-5-carboxylate reductases (PYCRs). PYCR3 is exclusively linked to the biosynthesis of proline from ornithine. This is Pyrroline-5-carboxylate reductase 3 from Bos taurus (Bovine).